Here is a 441-residue protein sequence, read N- to C-terminus: Endoglucanase E-2 (441 aa).

Residues 1-31 (MSPRPLRALLGAAAAALVSAAALAFPSQAAA) constitute a signal peptide (tat-type signal). The catalytic stretch occupies residues 32–320 (NDSPFYVNPN…YEMAIAAGGT (289 aa)). Residue D110 is part of the active site. Cystine bridges form between C111/C156 and C263/C298. D148 serves as the catalytic Proton donor. D296 acts as the Nucleophile in catalysis. The segment at 317–343 (AGGTNPNPNPNPTPTPTPTPTPPPGSS) is disordered. The linker stretch occupies residues 321–340 (NPNPNPNPTPTPTPTPTPPP). Residues 323 to 341 (NPNPNPTPTPTPTPTPPPG) show a composition bias toward pro residues. The CBM2 domain occupies 339–441 (PPGSSGACTA…SVPTLTCAAS (103 aa)). Residues C346 and C438 are joined by a disulfide bond.

Belongs to the glycosyl hydrolase 6 (cellulase B) family. In terms of assembly, homodimer. In terms of processing, predicted to be exported by the Tat system. The position of the signal peptide cleavage has been experimentally proven.

The catalysed reaction is Endohydrolysis of (1-&gt;4)-beta-D-glucosidic linkages in cellulose, lichenin and cereal beta-D-glucans.. It participates in glycan metabolism; cellulose degradation. The polypeptide is Endoglucanase E-2 (celB) (Thermobifida fusca (Thermomonospora fusca)).